Here is a 534-residue protein sequence, read N- to C-terminus: Phosphoenolpyruvate carboxykinase (ATP) (534 aa).

Substrate-binding residues include arginine 58, tyrosine 194, and lysine 200. ATP is bound by residues lysine 200, histidine 219, and 235–243 (GLSGTGKTT). Mn(2+) is bound by residues lysine 200 and histidine 219. Aspartate 256 is a Mn(2+) binding site. Residues glutamate 284, arginine 322, and threonine 449 each contribute to the ATP site. A substrate-binding site is contributed by arginine 322.

This sequence belongs to the phosphoenolpyruvate carboxykinase (ATP) family. Mn(2+) is required as a cofactor.

Its subcellular location is the cytoplasm. The enzyme catalyses oxaloacetate + ATP = phosphoenolpyruvate + ADP + CO2. It participates in carbohydrate biosynthesis; gluconeogenesis. Functionally, involved in the gluconeogenesis. Catalyzes the conversion of oxaloacetate (OAA) to phosphoenolpyruvate (PEP) through direct phosphoryl transfer between the nucleoside triphosphate and OAA. This Novosphingobium aromaticivorans (strain ATCC 700278 / DSM 12444 / CCUG 56034 / CIP 105152 / NBRC 16084 / F199) protein is Phosphoenolpyruvate carboxykinase (ATP).